We begin with the raw amino-acid sequence, 127 residues long: Large ribosomal subunit protein uL18 (127 aa).

This sequence belongs to the universal ribosomal protein uL18 family. Part of the 50S ribosomal subunit; part of the 5S rRNA/L5/L18/L25 subcomplex. Contacts the 5S and 23S rRNAs.

This is one of the proteins that bind and probably mediate the attachment of the 5S RNA into the large ribosomal subunit, where it forms part of the central protuberance. The sequence is that of Large ribosomal subunit protein uL18 from Streptomyces avermitilis (strain ATCC 31267 / DSM 46492 / JCM 5070 / NBRC 14893 / NCIMB 12804 / NRRL 8165 / MA-4680).